A 330-amino-acid polypeptide reads, in one-letter code: Aspartate--ammonia ligase (330 aa).

This sequence belongs to the class-II aminoacyl-tRNA synthetase family. AsnA subfamily.

The protein resides in the cytoplasm. It carries out the reaction L-aspartate + NH4(+) + ATP = L-asparagine + AMP + diphosphate + H(+). The protein operates within amino-acid biosynthesis; L-asparagine biosynthesis; L-asparagine from L-aspartate (ammonia route): step 1/1. The polypeptide is Aspartate--ammonia ligase (Salmonella schwarzengrund (strain CVM19633)).